Reading from the N-terminus, the 379-residue chain is Putative 2-hydroxyacid dehydrogenase YGL185C (379 aa).

Residues 207 to 208 (SI), 291 to 293 (LGR), and Asp317 each bind NAD(+). Arg293 is an active-site residue. Glu322 is a catalytic residue. Residue His341 is the Proton donor of the active site. 341-344 (HLGS) is an NAD(+) binding site.

This sequence belongs to the D-isomer specific 2-hydroxyacid dehydrogenase family.

This chain is Putative 2-hydroxyacid dehydrogenase YGL185C, found in Saccharomyces cerevisiae (strain ATCC 204508 / S288c) (Baker's yeast).